A 304-amino-acid polypeptide reads, in one-letter code: Acetyl-coenzyme A carboxylase carboxyl transferase subunit beta (304 aa).

A CoA carboxyltransferase N-terminal domain is found at Leu29 to Pro298. Zn(2+) contacts are provided by Cys33, Cys36, Cys52, and Cys55. The segment at Cys33–Cys55 adopts a C4-type zinc-finger fold.

Belongs to the AccD/PCCB family. In terms of assembly, acetyl-CoA carboxylase is a heterohexamer composed of biotin carboxyl carrier protein (AccB), biotin carboxylase (AccC) and two subunits each of ACCase subunit alpha (AccA) and ACCase subunit beta (AccD). Requires Zn(2+) as cofactor.

The protein resides in the cytoplasm. The enzyme catalyses N(6)-carboxybiotinyl-L-lysyl-[protein] + acetyl-CoA = N(6)-biotinyl-L-lysyl-[protein] + malonyl-CoA. It participates in lipid metabolism; malonyl-CoA biosynthesis; malonyl-CoA from acetyl-CoA: step 1/1. Component of the acetyl coenzyme A carboxylase (ACC) complex. Biotin carboxylase (BC) catalyzes the carboxylation of biotin on its carrier protein (BCCP) and then the CO(2) group is transferred by the transcarboxylase to acetyl-CoA to form malonyl-CoA. This Acaryochloris marina (strain MBIC 11017) protein is Acetyl-coenzyme A carboxylase carboxyl transferase subunit beta.